Reading from the N-terminus, the 419-residue chain is Tyrosine--tRNA ligase 2 (419 aa).

Tyrosine 34 is an L-tyrosine binding site. The 'HIGH' region motif lies at 39 to 48; that stretch reads PTGDSMHIGH. Residues tyrosine 168 and glutamine 172 each coordinate L-tyrosine. Residues 230-234 carry the 'KMSKS' region motif; that stretch reads KFGKS. An ATP-binding site is contributed by lysine 233. Residues 352–418 enclose the S4 RNA-binding domain; the sequence is KNIVEWLVDL…GKKNYSLVKL (67 aa).

Belongs to the class-I aminoacyl-tRNA synthetase family. TyrS type 1 subfamily. In terms of assembly, homodimer.

It localises to the cytoplasm. It catalyses the reaction tRNA(Tyr) + L-tyrosine + ATP = L-tyrosyl-tRNA(Tyr) + AMP + diphosphate + H(+). Catalyzes the attachment of tyrosine to tRNA(Tyr) in a two-step reaction: tyrosine is first activated by ATP to form Tyr-AMP and then transferred to the acceptor end of tRNA(Tyr). This chain is Tyrosine--tRNA ligase 2, found in Bacillus anthracis.